Consider the following 777-residue polypeptide: MTVATEKTPHKSSSMFKLFSNKLRGNNDSTPAAAPAPVPTKKLTKAHTSAHISRSASTNTPHPLRNGVTGIPSASPAPRQMTRRSTGVTPTMVKSSKQLSTLTAHNSNPFRNKNGTISSASHTHNGPTNSQHMVYNPYGINNRPTETQSSVRGSSYSRHGSGSHISSGSASSTNNNTDLSFYMHDGDNKIRMLPLPIADPNEFLPDDIKQVSIHLSDNFSFDKDNKTIGSGGSSEVRIVRSNYRSKDVYALKKLNMIYDETPEKFYKRCSKEFIIAKQLSNNIHITSTFYLVKVPTTIYTTRGWGFIMELGSKDLFQLMEKSGWKNVPLHEKFCLFKQVAQGVKFCHDNGIAHRDLKPENVLLSKDGVCKLTDFGISDWYHKENEDGTIEVKQNAGMIGSPPYAPPEVMYWDAKKKYPTSMQKPYDPLKLDCYSLGIIFITLINNIIPFFESCNMDPKFREYENSYNNFIRYQNKNFRQKGTYKPGPGSEYMLARRFKNADASRVAWRLADPDPETRYTMEDLFNDPWFQSVETCVDVNDVNLVRHPQIKKTSSEGINLVNAADAHPIPSPMVGTDTNGGLHSDSENPAGTHTTEESVETPKPASIRELHKPRSMVDIAESPMKKAATTPLFTLDEEAKEERDHEQETNTTAEADNEKAQTVPTSAVDTNEFASKENATTTDNDNVNTKATTADPTTQQGAEITETGSIAGSISASISASITASMSGSVSGAATAPIPRRDPSNRSIHSNATSTGTAGRKKKVVHHHMEVPGSAFQI.

Residues 21–174 (NKLRGNNDST…ISSGSASSTN (154 aa)) form a disordered region. The span at 30 to 41 (TPAAAPAPVPTK) shows a compositional bias: low complexity. 2 stretches are compositionally biased toward polar residues: residues 50–61 (AHISRSASTNTP) and 83–133 (RRST…SQHM). The span at 149–172 (SSVRGSSYSRHGSGSHISSGSASS) shows a compositional bias: low complexity. In terms of domain architecture, Protein kinase spans 222–529 (DKDNKTIGSG…MEDLFNDPWF (308 aa)). ATP contacts are provided by residues 228–236 (IGSGGSSEV) and K252. Residue D355 is the Proton acceptor of the active site. Disordered stretches follow at residues 564-705 (DAHP…EITE) and 728-764 (SVSG…KKVV). Polar residues-rich tracts occupy residues 575–592 (TDTN…AGTH) and 648–672 (TNTT…TNEF). Residues 677 to 694 (NATTTDNDNVNTKATTAD) are compositionally biased toward low complexity. The span at 744–756 (NRSIHSNATSTGT) shows a compositional bias: polar residues.

The protein belongs to the protein kinase superfamily. Ser/Thr protein kinase family.

It catalyses the reaction L-seryl-[protein] + ATP = O-phospho-L-seryl-[protein] + ADP + H(+). It carries out the reaction L-threonyl-[protein] + ATP = O-phospho-L-threonyl-[protein] + ADP + H(+). The chain is Serine/threonine-protein kinase PTK2 (PTK2) from Candida glabrata (strain ATCC 2001 / BCRC 20586 / JCM 3761 / NBRC 0622 / NRRL Y-65 / CBS 138) (Yeast).